The following is a 310-amino-acid chain: Collagen-like protein V6 (310 aa).

Residues Met-1–Tyr-41 show a composition bias toward polar residues. Residues Met-1–Gly-183 form a disordered region. 2 consecutive Collagen-like domains span residues Gly-61–Ala-119 and Gly-123–Pro-182. A compositionally biased stretch (basic and acidic residues) spans Ser-92–Ser-101. Asn-227 and Asn-264 each carry an N-linked (GlcNAc...) asparagine; by host glycan.

This sequence belongs to the sputnik virus V6 family.

The chain is Collagen-like protein V6 from Sputnik virophage.